A 20-amino-acid chain; its full sequence is Non-specific lipid-transfer protein (20 aa).

It belongs to the plant LTP family.

Its function is as follows. Plant non-specific lipid-transfer proteins transfer phospholipids as well as galactolipids across membranes. May play a role in wax or cutin deposition in the cell walls of expanding epidermal cells and certain secretory tissues. In Citrus limon (Lemon), this protein is Non-specific lipid-transfer protein.